Consider the following 411-residue polypeptide: Dual-specificity RNA methyltransferase RlmN (411 aa).

Glutamate 125 (proton acceptor) is an active-site residue. The 250-residue stretch at 131 to 380 folds into the Radical SAM core domain; it reads EEGRGTLCVS…IRTPRGRDIL (250 aa). Cysteine 138 and cysteine 383 are disulfide-bonded. Positions 145, 149, and 152 each coordinate [4Fe-4S] cluster. S-adenosyl-L-methionine is bound by residues 209 to 210, serine 241, 263 to 265, and asparagine 340; these read GE and SLH. The active-site S-methylcysteine intermediate is cysteine 383.

It belongs to the radical SAM superfamily. RlmN family. It depends on [4Fe-4S] cluster as a cofactor.

Its subcellular location is the cytoplasm. The enzyme catalyses adenosine(2503) in 23S rRNA + 2 reduced [2Fe-2S]-[ferredoxin] + 2 S-adenosyl-L-methionine = 2-methyladenosine(2503) in 23S rRNA + 5'-deoxyadenosine + L-methionine + 2 oxidized [2Fe-2S]-[ferredoxin] + S-adenosyl-L-homocysteine. The catalysed reaction is adenosine(37) in tRNA + 2 reduced [2Fe-2S]-[ferredoxin] + 2 S-adenosyl-L-methionine = 2-methyladenosine(37) in tRNA + 5'-deoxyadenosine + L-methionine + 2 oxidized [2Fe-2S]-[ferredoxin] + S-adenosyl-L-homocysteine. Specifically methylates position 2 of adenine 2503 in 23S rRNA and position 2 of adenine 37 in tRNAs. m2A2503 modification seems to play a crucial role in the proofreading step occurring at the peptidyl transferase center and thus would serve to optimize ribosomal fidelity. The polypeptide is Dual-specificity RNA methyltransferase RlmN (Brucella anthropi (strain ATCC 49188 / DSM 6882 / CCUG 24695 / JCM 21032 / LMG 3331 / NBRC 15819 / NCTC 12168 / Alc 37) (Ochrobactrum anthropi)).